The following is a 303-amino-acid chain: UDP-3-O-acyl-N-acetylglucosamine deacetylase (303 aa).

Histidine 78, histidine 237, and aspartate 241 together coordinate Zn(2+). Histidine 264 functions as the Proton donor in the catalytic mechanism.

The protein belongs to the LpxC family. Zn(2+) serves as cofactor.

The enzyme catalyses a UDP-3-O-[(3R)-3-hydroxyacyl]-N-acetyl-alpha-D-glucosamine + H2O = a UDP-3-O-[(3R)-3-hydroxyacyl]-alpha-D-glucosamine + acetate. It participates in glycolipid biosynthesis; lipid IV(A) biosynthesis; lipid IV(A) from (3R)-3-hydroxytetradecanoyl-[acyl-carrier-protein] and UDP-N-acetyl-alpha-D-glucosamine: step 2/6. Its function is as follows. Catalyzes the hydrolysis of UDP-3-O-myristoyl-N-acetylglucosamine to form UDP-3-O-myristoylglucosamine and acetate, the committed step in lipid A biosynthesis. This is UDP-3-O-acyl-N-acetylglucosamine deacetylase from Stenotrophomonas maltophilia (strain R551-3).